The sequence spans 692 residues: Potassium-transporting ATPase ATP-binding subunit (692 aa).

A run of 4 helical transmembrane segments spans residues Pro50–Ser70, Gly77–Ala97, Leu240–Phe260, and Val266–Ile286. The active-site 4-aspartylphosphate intermediate is the Asp319. ATP-binding positions include Asp356, Glu360, Phe388 to Ser395, and Lys407. Mg(2+)-binding residues include Asp530 and Asp534. A run of 3 helical transmembrane segments spans residues Phe600 to Met620, Ala628 to Met648, and Gly672 to Ile692.

It belongs to the cation transport ATPase (P-type) (TC 3.A.3) family. Type IA subfamily. As to quaternary structure, the system is composed of three essential subunits: KdpA, KdpB and KdpC.

The protein resides in the cell membrane. The enzyme catalyses K(+)(out) + ATP + H2O = K(+)(in) + ADP + phosphate + H(+). Part of the high-affinity ATP-driven potassium transport (or Kdp) system, which catalyzes the hydrolysis of ATP coupled with the electrogenic transport of potassium into the cytoplasm. This subunit is responsible for energy coupling to the transport system and for the release of the potassium ions to the cytoplasm. In Bacillus cereus (strain 03BB102), this protein is Potassium-transporting ATPase ATP-binding subunit.